The following is a 334-amino-acid chain: Glucokinase-like protein XF_1460 (334 aa).

18 to 23 (ADVGGT) provides a ligand contact to ATP.

This sequence belongs to the bacterial glucokinase family.

The chain is Glucokinase-like protein XF_1460 from Xylella fastidiosa (strain 9a5c).